The sequence spans 65 residues: Toxin AaHIT4 (65 aa).

In terms of domain architecture, LCN-type CS-alpha/beta spans 1–64; sequence EHGYLLNKYT…LWNYKTNKCD (64 aa). 4 disulfides stabilise this stretch: Cys-12–Cys-63, Cys-16–Cys-38, Cys-23–Cys-45, and Cys-27–Cys-47.

It belongs to the long (4 C-C) scorpion toxin superfamily. Sodium channel inhibitor family. In terms of tissue distribution, expressed by the venom gland.

Its subcellular location is the secreted. Its function is as follows. Has a toxic effect on insects and mammals and is capable of competing with anti-insect scorpion toxins for binding to the sodium channel (Nav) of insects. It also modulates the binding of alpha-type and beta-type anti-mammal scorpion toxins to the mammal sodium channel. It may act on both site 3 and site 4 of voltage-gated sodium channels. This chain is Toxin AaHIT4, found in Androctonus australis (Sahara scorpion).